The primary structure comprises 900 residues: Phospholipase DDHD1 (900 aa).

Disordered regions lie at residues 1 to 28 (MNYP…ELGS), 100 to 152 (LRYY…GGPA), and 202 to 233 (GARP…DEDR). Phosphoserine is present on residues Ser-8 and Ser-11. Residues 130–140 (SGGGGATGGSP) are compositionally biased toward gly residues. Residue Ser-537 is part of the active site. A DDHD domain is found at 611–886 (LKFKVENFFC…ALFLLTFMYK (276 aa)). 2 disordered regions span residues 706–725 (AKEP…PSPV) and 768–801 (SSTT…TQTL). The segment covering 710–725 (TSVSENEGISTIPSPV) has biased composition (polar residues). Ser-723 bears the Phosphoserine mark. Residues 776–787 (TSKDSMEDEKKP) are compositionally biased toward basic and acidic residues. Over residues 791–801 (PSATTVGTQTL) the composition is skewed to polar residues.

It belongs to the PA-PLA1 family. In terms of assembly, forms homooligomers and, to a much smaller extent, heterooligomers with DDHD2. Highly expressed in testis. Also expressed in brain, spleen and lung. Only expressed in cerebellum in fetal brain.

The protein localises to the cytoplasm. The catalysed reaction is a 1,2-diacyl-sn-glycero-3-phosphate + H2O = a 2-acyl-sn-glycerol 3-phosphate + a fatty acid + H(+). The enzyme catalyses a 1,2-diacyl-sn-glycero-3-phospho-(1D-myo-inositol) + H2O = a 2-acyl-sn-glycero-3-phospho-D-myo-inositol + a fatty acid + H(+). It catalyses the reaction 1-octadecanoyl-2-(5Z,8Z,11Z,14Z-eicosatetraenoyl)-sn-glycero-3-phospho-(1D-myo-inositol) + H2O = 2-(5Z,8Z,11Z,14Z-eicosatetraenoyl)-sn-glycero-3-phospho-(1D-myo-inositol) + octadecanoate + H(+). It carries out the reaction a 1-acyl-2-(5Z,8Z,11Z,14Z-eicosatetraenoyl)-sn-glycero-3-phospho-(1D-myo-inositol) + H2O = 2-(5Z,8Z,11Z,14Z-eicosatetraenoyl)-sn-glycero-3-phospho-(1D-myo-inositol) + a fatty acid + H(+). The catalysed reaction is 1,2-dihexadecanoyl-sn-glycero-3-phospho-(1D-myo-inositol) + H2O = 2-hexadecanoyl-sn-glycero-3-phospho-(1D-myo-inositol) + hexadecanoate + H(+). The enzyme catalyses a 1-acyl-2-(5Z,8Z,11Z,14Z)-eicosatetraenoyl-sn-glycero-3-phosphate + H2O = 2-(5Z,8Z,11Z,14Z-eicosatetraenoyl)-sn-glycero-3-phosphate + a fatty acid + H(+). It catalyses the reaction 1,2-di-(9Z-octadecenoyl)-sn-glycero-3-phosphate + H2O = 2-(9Z-octadecenoyl)-sn-glycero-3-phosphate + (9Z)-octadecenoate + H(+). It carries out the reaction 1-hexadecanoyl-2-(9Z-octadecenoyl)-sn-glycero-3-phosphate + H2O = 2-(9Z-octadecenoyl)-sn-glycero-3-phosphate + hexadecanoate + H(+). The catalysed reaction is 1-hexadecanoyl-2-(9Z-octadecenoyl)-sn-glycero-3-phospho-L-serine + H2O = 2-(9Z-octadecenoyl)-sn-glycero-3-phospho-L-serine + hexadecanoate + H(+). The enzyme catalyses 1,2-di-(5Z,8Z,11Z,14Z)-eicosatetraenoyl-sn-glycero-3-phosphate + H2O = 2-(5Z,8Z,11Z,14Z-eicosatetraenoyl)-sn-glycero-3-phosphate + (5Z,8Z,11Z,14Z)-eicosatetraenoate + H(+). It catalyses the reaction 1-octadecanoyl-2-(5Z,8Z,11Z,14Z-eicosatetraenoyl)-sn-glycero-3-phosphate + H2O = 2-(5Z,8Z,11Z,14Z-eicosatetraenoyl)-sn-glycero-3-phosphate + octadecanoate + H(+). It carries out the reaction a 1,2-diacyl-sn-glycero-3-phosphocholine + H2O = a 2-acyl-sn-glycero-3-phosphocholine + a fatty acid + H(+). The catalysed reaction is a 1,2-diacyl-sn-glycero-3-phosphoethanolamine + H2O = a 2-acyl-sn-glycero-3-phosphoethanolamine + a fatty acid + H(+). The enzyme catalyses a 1,2-diacyl-sn-glycero-3-phospho-L-serine + H2O = a 2-acyl-sn-glycero-3-phospho-L-serine + a fatty acid + H(+). It catalyses the reaction a 1,2-diacyl-sn-glycero-3-phospho-(1'-sn-glycerol) + H2O = 2-acyl-sn-glycero-3-phospho-(1'-sn-glycerol) + a fatty acid + H(+). It carries out the reaction 1-hexadecanoyl-2-(9Z-octadecenoyl)-sn-glycero-3-phospho-(1'-sn-glycerol) + H2O = 2-(9Z-octadecenoyl)-sn-glycero-3-phospho-(1'-sn-glycerol) + hexadecanoate + H(+). The catalysed reaction is 1-acyl-2-(5Z,8Z,11Z,14Z-eicosatetraenoyl)-sn-glycero-3-phosphocholine + H2O = 2-(5Z,8Z,11Z,14Z)-eicosatetraenoyl-sn-glycero-3-phosphocholine + a fatty acid + H(+). The enzyme catalyses 1-acyl-2-(5Z,8Z,11Z,14Z)-eicosatetraenoyl-sn-glycero-3-phosphoethanolamine + H2O = 2-(5Z,8Z,11Z,14Z)-eicosatetraenoyl-sn-glycero-3-phosphoethanolamine + a fatty acid + H(+). It catalyses the reaction 1-(9Z-octadecenoyl)-2-(7Z,10Z,13Z,16Z,19Z-docosapentaenoyl)-sn-glycero-3-phospho-1D-myo-inositol + H2O = 2-(7Z,10Z,13Z,16Z,19Z-docosapentaenoyl)-sn-glycero-3-phospho-1D-myo-inositol + (9Z)-octadecenoate + H(+). It carries out the reaction 1-(9Z-octadecenoyl)-2-(5Z,8Z,11Z,14Z-eicosatetraenoyl)-sn-glycero-3-phospho-1D-myo-inositol + H2O = 2-(5Z,8Z,11Z,14Z-eicosatetraenoyl)-sn-glycero-3-phospho-(1D-myo-inositol) + (9Z)-octadecenoate + H(+). The catalysed reaction is 1,2-di-(9Z-octadecenoyl)-sn-glycero-3-phospho-1D-myo-inositol + H2O = 2-(9Z-octadecenoyl)-sn-glycero-3-phospho-1D-myo-inositol + (9Z)-octadecenoate + H(+). The enzyme catalyses 1-(9Z-octadecenoyl)-2-(8Z,11Z,14Z-eicosatrienoyl)-sn-glycero-3-phospho-1D-myo-inositol + H2O = 2-(8Z,11Z,14Z-eicosatrienoyl)-sn-glycero-3-phospho-1D-myo-inositol + (9Z)-octadecenoate + H(+). It catalyses the reaction 1,2-di-(9Z-octadecenoyl)-sn-glycero-3-phosphocholine + H2O = (9Z-octadecenoyl)-sn-glycero-3-phosphocholine + (9Z)-octadecenoate + H(+). It functions in the pathway phospholipid metabolism; phosphatidylinositol metabolism. Phosphatidate (1,2-diacyl-sn-glycero-3-phosphate, PA) can positively regulate phospholipase A1 activity. Phospholipase A1 (PLA1) that hydrolyzes ester bonds at the sn-1 position of glycerophospholipids producing a free fatty acid and a lysophospholipid. Prefers phosphatidate (1,2-diacyl-sn-glycero-3-phosphate, PA) as substrate in vitro, but can efficiently hydrolyze phosphatidylinositol (1,2-diacyl-sn-glycero-3-phospho-(1D-myo-inositol), PI), as well as a range of other glycerophospholipid substrates such as phosphatidylcholine (1,2-diacyl-sn-glycero-3-phosphocholine, PC), phosphatidylethanolamine (1,2-diacyl-sn-glycero-3-phosphoethanolamine, PE), phosphatidylserine (1,2-diacyl-sn-glycero-3-phospho-L-serine, PS) and phosphatidylglycerol (1,2-diacyl-sn-glycero-3-phospho-(1'-sn-glycerol), PG). Involved in the regulation of the endogenous content of polyunsaturated PI and PS lipids in the nervous system. Changes in these lipids extend to downstream metabolic products like PI phosphates PIP and PIP2, which play fundamental roles in cell biology. Regulates mitochondrial morphology. These dynamic changes may be due to PA hydrolysis at the mitochondrial surface. May play a regulatory role in spermatogenesis or sperm function. This is Phospholipase DDHD1 from Homo sapiens (Human).